The primary structure comprises 509 residues: uncharacterized protein (509 aa).

The 118-residue stretch at 108–225 (GKSSLCNLLA…KRHKPLFPVI (118 aa)) folds into the G domain.

This is an uncharacterized protein from Acinetobacter baylyi (strain ATCC 33305 / BD413 / ADP1).